Reading from the N-terminus, the 168-residue chain is CASP-like protein 1U1 (168 aa).

Residues 1–6 (MDGAAR) lie on the Cytoplasmic side of the membrane. Residues 7–27 (AVSLFFRIAVVGLSVAAAVVM) traverse the membrane as a helical segment. The Extracellular segment spans residues 28–49 (ATASQAFPFNYGGAVSYTKYPA). A helical transmembrane segment spans residues 50–70 (FVYFVVAAVVSAVCSAAALYL). Over 71–80 (SVVREAAAGW) the chain is Cytoplasmic. A helical transmembrane segment spans residues 81-101 (AVALLDVVTMGLLFSAAGAVF). Topologically, residues 102–138 (AVRRMAPLYLGVAGADTVAGRWVNGEFCHAAGAFCWR) are extracellular. Residues 139–159 (VTTSAIICAFAAAAVSVAVLT) traverse the membrane as a helical segment. Residues 160–168 (KGARHRGKH) are Cytoplasmic-facing.

It belongs to the Casparian strip membrane proteins (CASP) family. As to quaternary structure, homodimer and heterodimers.

It is found in the cell membrane. The chain is CASP-like protein 1U1 from Oryza sativa subsp. japonica (Rice).